The primary structure comprises 79 residues: Putative defensin-like protein 80 (79 aa).

An N-terminal signal peptide occupies residues 1-26 (MDVQRSSYIFIALSIIAMFLITGVKP). Intrachain disulfides connect Cys-32-Cys-65, Cys-36-Cys-58, Cys-44-Cys-63, and Cys-48-Cys-64.

The protein belongs to the DEFL family.

It localises to the secreted. The chain is Putative defensin-like protein 80 (LCR81) from Arabidopsis thaliana (Mouse-ear cress).